Reading from the N-terminus, the 200-residue chain is NADH-quinone oxidoreductase subunit C (200 aa).

This sequence belongs to the complex I 30 kDa subunit family. In terms of assembly, NDH-1 is composed of 14 different subunits. Subunits NuoB, C, D, E, F, and G constitute the peripheral sector of the complex.

Its subcellular location is the cell inner membrane. It catalyses the reaction a quinone + NADH + 5 H(+)(in) = a quinol + NAD(+) + 4 H(+)(out). Its function is as follows. NDH-1 shuttles electrons from NADH, via FMN and iron-sulfur (Fe-S) centers, to quinones in the respiratory chain. The immediate electron acceptor for the enzyme in this species is believed to be ubiquinone. Couples the redox reaction to proton translocation (for every two electrons transferred, four hydrogen ions are translocated across the cytoplasmic membrane), and thus conserves the redox energy in a proton gradient. This chain is NADH-quinone oxidoreductase subunit C, found in Rhizobium etli (strain ATCC 51251 / DSM 11541 / JCM 21823 / NBRC 15573 / CFN 42).